Here is a 148-residue protein sequence, read N- to C-terminus: Large ribosomal subunit protein bL9 (148 aa).

It belongs to the bacterial ribosomal protein bL9 family.

Its function is as follows. Binds to the 23S rRNA. In Pseudomonas fluorescens (strain Pf0-1), this protein is Large ribosomal subunit protein bL9.